A 74-amino-acid chain; its full sequence is Protein SOM1, mitochondrial (74 aa).

In terms of assembly, component of the mitochondrial inner membrane peptidase (IMP) complex which at least consists of IMP1, IMP2 and SOM1.

The protein localises to the mitochondrion inner membrane. Its function is as follows. Non-catalytic component of the mitochondrial inner membrane peptidase (IMP) complex. IMP catalyzes the removal of signal peptides required for the targeting of proteins from the mitochondrial matrix, across the inner membrane, into the inter-membrane space. SOM1 facilitates cleavage of a subset of IMP substrates. This is Protein SOM1, mitochondrial (SOM1) from Saccharomyces cerevisiae (strain ATCC 204508 / S288c) (Baker's yeast).